Here is a 1054-residue protein sequence, read N- to C-terminus: DIS3-like exonuclease 1 (1054 aa).

Residues 236 to 309 (AGIKSGRYIQ…PKNEWKGRTV (74 aa)) enclose the CSD1 domain. The 67-residue stretch at 365-431 (ILVTPWDYRI…GEIATILVEN (67 aa)) folds into the CSD2 domain. One can recognise an RNB domain in the interval 465–816 (RKDLRKSHLV…VHRLLMAAIS (352 aa)). Ser989 is modified (phosphoserine).

This sequence belongs to the RNR ribonuclease family. In terms of assembly, component of the RNA exosome complex. The catalytically inactive RNA exosome core (Exo-9) complex is believed to associate with catalytic subunits EXOSC10, and DIS3 or DIS3L in cytoplasmic- and nuclear-specific RNA exosome complex forms. It depends on Mg(2+) as a cofactor.

The protein localises to the cytoplasm. It catalyses the reaction Exonucleolytic cleavage in the 3'- to 5'-direction to yield nucleoside 5'-phosphates.. Functionally, catalytic component of the RNA exosome complex which has 3'-&gt;5' exoribonuclease activity and participates in a multitude of cellular RNA processing and degradation events. In the cytoplasm, the RNA exosome complex is involved in general mRNA turnover and specifically degrades inherently unstable mRNAs containing AU-rich elements (AREs) within their 3' untranslated regions, and in RNA surveillance pathways, preventing translation of aberrant mRNAs. It seems to be involved in degradation of histone mRNA. The sequence is that of DIS3-like exonuclease 1 (DIS3L) from Homo sapiens (Human).